A 537-amino-acid polypeptide reads, in one-letter code: CTP synthase (537 aa).

Residues 1-268 are amidoligase domain; it reads MSFKCIFLTG…STFITEKLGL (268 aa). Serine 14 contacts CTP. Residue serine 14 coordinates UTP. Residue 15–20 coordinates ATP; that stretch reads SLGKGL. Tyrosine 55 contacts L-glutamine. Residue aspartate 72 participates in ATP binding. Mg(2+) is bound by residues aspartate 72 and glutamate 142. CTP-binding positions include 149-151, 188-193, and lysine 224; these read DIE and KTKPTQ. Residues 188 to 193 and lysine 224 each bind UTP; that span reads KTKPTQ. The Glutamine amidotransferase type-1 domain maps to 294–533; that stretch reads RLGLVGKYVQ…IEAALLHSRN (240 aa). Glycine 353 is an L-glutamine binding site. Catalysis depends on cysteine 380, which acts as the Nucleophile; for glutamine hydrolysis. L-glutamine is bound by residues 381–384, glutamate 404, and arginine 461; that span reads LGMQ. Residues histidine 506 and glutamate 508 contribute to the active site.

This sequence belongs to the CTP synthase family. In terms of assembly, homotetramer.

The catalysed reaction is UTP + L-glutamine + ATP + H2O = CTP + L-glutamate + ADP + phosphate + 2 H(+). The enzyme catalyses L-glutamine + H2O = L-glutamate + NH4(+). It catalyses the reaction UTP + NH4(+) + ATP = CTP + ADP + phosphate + 2 H(+). Its pathway is pyrimidine metabolism; CTP biosynthesis via de novo pathway; CTP from UDP: step 2/2. Its activity is regulated as follows. Allosterically activated by GTP, when glutamine is the substrate; GTP has no effect on the reaction when ammonia is the substrate. The allosteric effector GTP functions by stabilizing the protein conformation that binds the tetrahedral intermediate(s) formed during glutamine hydrolysis. Inhibited by the product CTP, via allosteric rather than competitive inhibition. Catalyzes the ATP-dependent amination of UTP to CTP with either L-glutamine or ammonia as the source of nitrogen. Regulates intracellular CTP levels through interactions with the four ribonucleotide triphosphates. The polypeptide is CTP synthase (Chlamydia abortus (strain DSM 27085 / S26/3) (Chlamydophila abortus)).